The following is a 396-amino-acid chain: Protein btn1 (396 aa).

Transmembrane regions (helical) follow at residues 15 to 35 (CFLI…SAAL), 45 to 65 (GVVL…ASIL), 76 to 96 (IGFC…SSSV), 138 to 158 (LAGL…NFSV), 161 to 181 (TLII…FVLP), 234 to 254 (FLVY…LLFP), 296 to 316 (LAIT…LYLT), and 321 to 341 (FVLF…VNVY).

Belongs to the battenin family.

The protein resides in the endoplasmic reticulum membrane. It localises to the vacuole membrane. Involved in vacuolar transport and vacuole pH homeostasis. Also required for cytokinesis. The sequence is that of Protein btn1 from Schizosaccharomyces pombe (strain 972 / ATCC 24843) (Fission yeast).